A 236-amino-acid polypeptide reads, in one-letter code: Small ribosomal subunit protein uS5 (236 aa).

The S5 DRBM domain occupies 61 to 124 (ENQEILDIAL…NYAKLNIIEI (64 aa)).

It belongs to the universal ribosomal protein uS5 family. As to quaternary structure, part of the 30S ribosomal subunit. Contacts protein S4.

Its function is as follows. With S4 and S12 plays an important role in translational accuracy. The polypeptide is Small ribosomal subunit protein uS5 (Pyrococcus abyssi (strain GE5 / Orsay)).